The following is a 79-amino-acid chain: uncharacterized protein (79 aa).

2 consecutive transmembrane segments (helical) span residues 28 to 48 (CIIL…ALLA) and 51 to 71 (VALT…AFTV).

The protein resides in the cell membrane. This is an uncharacterized protein from Methanocaldococcus jannaschii (strain ATCC 43067 / DSM 2661 / JAL-1 / JCM 10045 / NBRC 100440) (Methanococcus jannaschii).